Consider the following 213-residue polypeptide: Glutamine amidotransferase-like class 1 domain-containing protein 1 (213 aa).

An N-terminal signal peptide occupies residues 1-20; it reads MTSKPTCLIVASAASAGVSA.

The protein belongs to the peptidase C56 family. In terms of assembly, homotetramer. Component of the FERRY complex.

The protein resides in the secreted. It localises to the early endosome. Functionally, component of the FERRY complex (Five-subunit Endosomal Rab5 and RNA/ribosome intermediary). The FERRY complex directly interacts with mRNAs and RAB5A, and functions as a RAB5A effector involved in the localization and the distribution of specific mRNAs most likely by mediating their endosomal transport. The complex recruits mRNAs and ribosomes to early endosomes through direct mRNA-interaction. The sequence is that of Glutamine amidotransferase-like class 1 domain-containing protein 1 from Danio rerio (Zebrafish).